We begin with the raw amino-acid sequence, 184 residues long: Peptide deformylase (184 aa).

Cys98 and His140 together coordinate Fe cation. The active site involves Glu141. His144 lines the Fe cation pocket.

This sequence belongs to the polypeptide deformylase family. Fe(2+) serves as cofactor.

It catalyses the reaction N-terminal N-formyl-L-methionyl-[peptide] + H2O = N-terminal L-methionyl-[peptide] + formate. Functionally, removes the formyl group from the N-terminal Met of newly synthesized proteins. Requires at least a dipeptide for an efficient rate of reaction. N-terminal L-methionine is a prerequisite for activity but the enzyme has broad specificity at other positions. The sequence is that of Peptide deformylase from Phocaeicola vulgatus (strain ATCC 8482 / DSM 1447 / JCM 5826 / CCUG 4940 / NBRC 14291 / NCTC 11154) (Bacteroides vulgatus).